A 256-amino-acid polypeptide reads, in one-letter code: Protein CC2D2B homolog (256 aa).

The segment at Met-1 to Ala-24 is disordered. The segment covering Ile-13–Leu-22 has biased composition (basic and acidic residues). Coiled-coil stretches lie at residues Asp-136–Ile-159 and Glu-194–Lys-214.

The protein is Protein CC2D2B homolog of Macaca fascicularis (Crab-eating macaque).